A 188-amino-acid chain; its full sequence is Probable thymidylate kinase (188 aa).

11–18 lines the ATP pocket; the sequence is GIDGSGKT.

It belongs to the thymidylate kinase family.

The catalysed reaction is dTMP + ATP = dTDP + ADP. The polypeptide is Probable thymidylate kinase (tmk) (Methanocaldococcus jannaschii (strain ATCC 43067 / DSM 2661 / JAL-1 / JCM 10045 / NBRC 100440) (Methanococcus jannaschii)).